The sequence spans 308 residues: 50 kDa gamma-zein (308 aa).

A signal peptide spans 1-19; sequence MKLVLVVLAFIALVSSVSC. The interval 27-159 is disordered; that stretch reads CGQQQSHEQQ…QPQQPQQYQQ (133 aa). Residues 55 to 119 are compositionally biased toward low complexity; that stretch reads HHQQQQHQQQ…QHHQQSQGHV (65 aa). A compositionally biased stretch (basic and acidic residues) spans 120–129; it reads QQHEQSHEQH. Low complexity predominate over residues 130-159; the sequence is QGQSHEQQHQQQFQGHDKQQQPQQPQQYQQ. Residue C286 is the site of GPI-anchor amidated cysteine attachment. Residues 287-308 constitute a propeptide, removed in mature form; it reads GLYHSYYQNNPCSSNDISGVCN.

It belongs to the gliadin/glutenin family. In terms of assembly, interacts with OP10 (via N-terminus).

It is found in the cell membrane. Its function is as follows. Zeins are major seed storage proteins. This Zea mays (Maize) protein is 50 kDa gamma-zein.